Here is an 81-residue protein sequence, read N- to C-terminus: Cytochrome b559 subunit alpha (81 aa).

Heme is bound by residues Arg18 and His23. The chain crosses the membrane as a helical span at residues 19-40 (YWVIHSITIPMLFIAGWLFVST).

Belongs to the PsbE/PsbF family. As to quaternary structure, heterodimer of an alpha subunit and a beta subunit. PSII is composed of 1 copy each of membrane proteins PsbA, PsbB, PsbC, PsbD, PsbE, PsbF, PsbH, PsbI, PsbJ, PsbK, PsbL, PsbM, PsbT, PsbX, PsbY, PsbZ, Psb30/Ycf12, peripheral proteins PsbO, CyanoQ (PsbQ), PsbU, PsbV and a large number of cofactors. It forms dimeric complexes. It depends on heme b as a cofactor.

Its subcellular location is the cellular thylakoid membrane. Its function is as follows. This b-type cytochrome is tightly associated with the reaction center of photosystem II (PSII). PSII is a light-driven water:plastoquinone oxidoreductase that uses light energy to abstract electrons from H(2)O, generating O(2) and a proton gradient subsequently used for ATP formation. It consists of a core antenna complex that captures photons, and an electron transfer chain that converts photonic excitation into a charge separation. This is Cytochrome b559 subunit alpha from Synechocystis sp. (strain ATCC 27184 / PCC 6803 / Kazusa).